The sequence spans 458 residues: Bifunctional protein HldE (458 aa).

A ribokinase region spans residues 1–311 (MVNVLVVGDL…ENLKSKKSGF (311 aa)). ATP is bound at residue 189 to 192 (NKKE). Residue aspartate 257 is part of the active site. The segment at 333-458 (FTNGCFDILH…TTNIINKIKG (126 aa)) is cytidylyltransferase.

It in the N-terminal section; belongs to the carbohydrate kinase PfkB family. This sequence in the C-terminal section; belongs to the cytidylyltransferase family. Homodimer.

It catalyses the reaction D-glycero-beta-D-manno-heptose 7-phosphate + ATP = D-glycero-beta-D-manno-heptose 1,7-bisphosphate + ADP + H(+). The enzyme catalyses D-glycero-beta-D-manno-heptose 1-phosphate + ATP + H(+) = ADP-D-glycero-beta-D-manno-heptose + diphosphate. The protein operates within nucleotide-sugar biosynthesis; ADP-L-glycero-beta-D-manno-heptose biosynthesis; ADP-L-glycero-beta-D-manno-heptose from D-glycero-beta-D-manno-heptose 7-phosphate: step 1/4. Its pathway is nucleotide-sugar biosynthesis; ADP-L-glycero-beta-D-manno-heptose biosynthesis; ADP-L-glycero-beta-D-manno-heptose from D-glycero-beta-D-manno-heptose 7-phosphate: step 3/4. Its function is as follows. Catalyzes the phosphorylation of D-glycero-D-manno-heptose 7-phosphate at the C-1 position to selectively form D-glycero-beta-D-manno-heptose-1,7-bisphosphate. In terms of biological role, catalyzes the ADP transfer from ATP to D-glycero-beta-D-manno-heptose 1-phosphate, yielding ADP-D-glycero-beta-D-manno-heptose. This is Bifunctional protein HldE from Campylobacter fetus subsp. fetus (strain 82-40).